A 304-amino-acid polypeptide reads, in one-letter code: Cell surface-binding protein OPG105 (304 aa).

One can recognise an Alpha-carbonic anhydrase domain in the interval 1–235 (MPQQLSPINI…NDDTQVYYSG (235 aa)). The Virion surface portion of the chain corresponds to 1–275 (MPQQLSPINI…YQKYIEENKT (275 aa)). A helical membrane pass occupies residues 276–294 (FAIIAIVFVFILTAILFFM). Over 295–304 (SRRYSREKQN) the chain is Intravirion.

It belongs to the alpha-carbonic anhydrase family. Homodimer; disulfide-linked. Post-translationally, apparently non-glycosylated.

The protein resides in the virion membrane. Binds to chondroitin sulfate on the cell surface to provide virion attachment to target cell. This chain is Cell surface-binding protein OPG105 (OPG105), found in Homo sapiens (Human).